The primary structure comprises 392 residues: 8-amino-7-oxononanoate synthase (392 aa).

Substrate is bound at residue Arg-19. Pyridoxal 5'-phosphate is bound at residue 106 to 107 (GY). Residue His-131 participates in substrate binding. Ser-176, His-204, and Thr-233 together coordinate pyridoxal 5'-phosphate. Residue Lys-236 is modified to N6-(pyridoxal phosphate)lysine. Thr-350 is a substrate binding site.

This sequence belongs to the class-II pyridoxal-phosphate-dependent aminotransferase family. BioF subfamily. Homodimer. The cofactor is pyridoxal 5'-phosphate.

It carries out the reaction 6-carboxyhexanoyl-[ACP] + L-alanine + H(+) = (8S)-8-amino-7-oxononanoate + holo-[ACP] + CO2. It participates in cofactor biosynthesis; biotin biosynthesis. Its function is as follows. Catalyzes the decarboxylative condensation of pimeloyl-[acyl-carrier protein] and L-alanine to produce 8-amino-7-oxononanoate (AON), [acyl-carrier protein], and carbon dioxide. The chain is 8-amino-7-oxononanoate synthase from Pseudomonas fluorescens (strain ATCC BAA-477 / NRRL B-23932 / Pf-5).